A 642-amino-acid chain; its full sequence is Threonine--tRNA ligase (642 aa).

The TGS domain occupies 1–61 (MPVITLPDGS…ENDTQLSIIT (61 aa)). The tract at residues 243 to 534 (DHRKIGKQLD…LTEEFAGFFP (292 aa)) is catalytic. Lysine 286 bears the N6-acetyllysine mark. Zn(2+) is bound by residues cysteine 334, histidine 385, and histidine 511.

The protein belongs to the class-II aminoacyl-tRNA synthetase family. In terms of assembly, homodimer. The cofactor is Zn(2+).

Its subcellular location is the cytoplasm. It catalyses the reaction tRNA(Thr) + L-threonine + ATP = L-threonyl-tRNA(Thr) + AMP + diphosphate + H(+). In terms of biological role, catalyzes the attachment of threonine to tRNA(Thr) in a two-step reaction: L-threonine is first activated by ATP to form Thr-AMP and then transferred to the acceptor end of tRNA(Thr). Also edits incorrectly charged L-seryl-tRNA(Thr). The polypeptide is Threonine--tRNA ligase (Shigella dysenteriae serotype 1 (strain Sd197)).